Consider the following 60-residue polypeptide: UPF0391 membrane protein CCNA_00709 (60 aa).

The next 2 helical transmembrane spans lie at 4–24 (WAII…SGLA) and 33–53 (ILFF…GTVF).

This sequence belongs to the UPF0391 family.

The protein localises to the cell membrane. This Caulobacter vibrioides (strain NA1000 / CB15N) (Caulobacter crescentus) protein is UPF0391 membrane protein CCNA_00709.